The primary structure comprises 208 residues: Large ribosomal subunit protein uL3 (208 aa).

N5-methylglutamine is present on Gln149.

The protein belongs to the universal ribosomal protein uL3 family. As to quaternary structure, part of the 50S ribosomal subunit. Forms a cluster with proteins L14 and L19. Methylated by PrmB.

In terms of biological role, one of the primary rRNA binding proteins, it binds directly near the 3'-end of the 23S rRNA, where it nucleates assembly of the 50S subunit. This is Large ribosomal subunit protein uL3 from Histophilus somni (strain 129Pt) (Haemophilus somnus).